A 156-amino-acid chain; its full sequence is ATP synthase subunit b (156 aa).

A helical transmembrane segment spans residues 7-29 (LLGQAISFALFVWFCMKYVWPPL).

Belongs to the ATPase B chain family. F-type ATPases have 2 components, F(1) - the catalytic core - and F(0) - the membrane proton channel. F(1) has five subunits: alpha(3), beta(3), gamma(1), delta(1), epsilon(1). F(0) has three main subunits: a(1), b(2) and c(10-14). The alpha and beta chains form an alternating ring which encloses part of the gamma chain. F(1) is attached to F(0) by a central stalk formed by the gamma and epsilon chains, while a peripheral stalk is formed by the delta and b chains.

The protein resides in the cell inner membrane. In terms of biological role, f(1)F(0) ATP synthase produces ATP from ADP in the presence of a proton or sodium gradient. F-type ATPases consist of two structural domains, F(1) containing the extramembraneous catalytic core and F(0) containing the membrane proton channel, linked together by a central stalk and a peripheral stalk. During catalysis, ATP synthesis in the catalytic domain of F(1) is coupled via a rotary mechanism of the central stalk subunits to proton translocation. Component of the F(0) channel, it forms part of the peripheral stalk, linking F(1) to F(0). The sequence is that of ATP synthase subunit b from Vibrio alginolyticus.